The chain runs to 151 residues: Ribonuclease P protein component (151 aa).

The interval 1–62 (MDEKDLATQP…LKGDSAFRRL (62 aa)) is disordered. The segment covering 28 to 48 (GAQGAEAQAAEGPLAAHAQGA) has biased composition (low complexity).

This sequence belongs to the RnpA family. In terms of assembly, consists of a catalytic RNA component (M1 or rnpB) and a protein subunit.

It carries out the reaction Endonucleolytic cleavage of RNA, removing 5'-extranucleotides from tRNA precursor.. Functionally, RNaseP catalyzes the removal of the 5'-leader sequence from pre-tRNA to produce the mature 5'-terminus. It can also cleave other RNA substrates such as 4.5S RNA. The protein component plays an auxiliary but essential role in vivo by binding to the 5'-leader sequence and broadening the substrate specificity of the ribozyme. The sequence is that of Ribonuclease P protein component from Thermus oshimai.